Reading from the N-terminus, the 997-residue chain is Mannuronan C5-epimerase AlgE5 (997 aa).

PbH1 repeat units follow at residues 133 to 155 (DRDV…DPHE), 157 to 179 (TINL…VADF), 180 to 202 (QIGG…NIVT), 204 to 226 (TNDF…VIQR), 257 to 279 (AHDV…RVYG), 280 to 315 (AEDV…GVSG), and 320 to 359 (TTGT…SVSN). Hemolysin-type calcium-binding repeat units follow at residues 388–403 (GTTG…AHET), 406–422 (GLDG…NDIL), 424–439 (GGAG…GADL), 557–573 (GHAG…DDIL), 574–590 (VGGA…GADL), 695–709 (GSAG…AADE), 712–729 (HGGA…ADVF), 828–839 (GSDGNDTLDGGS), 846–862 (GGAG…NDIL), and 864–880 (GGAG…SDIF).

The protein belongs to the D-mannuronate C5-epimerase family. Ca(2+) is required as a cofactor.

Its subcellular location is the secreted. It catalyses the reaction [(1-&gt;4)-beta-D-mannuronosyl](n) = [alginate](n). It functions in the pathway glycan biosynthesis; alginate biosynthesis. With respect to regulation, inhibited by zinc. Its function is as follows. Converts beta-D-mannuronic acid (M) to alpha-L-guluronic acid (G), producing a polymer with gel-forming capacity, required for the formation of the cyst coat. The polypeptide is Mannuronan C5-epimerase AlgE5 (Azotobacter vinelandii).